The primary structure comprises 160 residues: Ribosomal RNA large subunit methyltransferase H (160 aa).

S-adenosyl-L-methionine contacts are provided by residues L76, G108, and 127–132; that span reads LGKMTW.

Belongs to the RNA methyltransferase RlmH family. In terms of assembly, homodimer.

Its subcellular location is the cytoplasm. It carries out the reaction pseudouridine(1915) in 23S rRNA + S-adenosyl-L-methionine = N(3)-methylpseudouridine(1915) in 23S rRNA + S-adenosyl-L-homocysteine + H(+). In terms of biological role, specifically methylates the pseudouridine at position 1915 (m3Psi1915) in 23S rRNA. The polypeptide is Ribosomal RNA large subunit methyltransferase H (Rhizobium leguminosarum bv. trifolii (strain WSM2304)).